The sequence spans 229 residues: Endonuclease NucS (229 aa).

Belongs to the NucS endonuclease family.

It localises to the cytoplasm. Functionally, cleaves both 3' and 5' ssDNA extremities of branched DNA structures. The chain is Endonuclease NucS from Corynebacterium diphtheriae (strain ATCC 700971 / NCTC 13129 / Biotype gravis).